Reading from the N-terminus, the 316-residue chain is Porphobilinogen deaminase (316 aa).

C249 is subject to S-(dipyrrolylmethanemethyl)cysteine.

Belongs to the HMBS family. As to quaternary structure, monomer. It depends on dipyrromethane as a cofactor.

The catalysed reaction is 4 porphobilinogen + H2O = hydroxymethylbilane + 4 NH4(+). The protein operates within porphyrin-containing compound metabolism; protoporphyrin-IX biosynthesis; coproporphyrinogen-III from 5-aminolevulinate: step 2/4. Functionally, tetrapolymerization of the monopyrrole PBG into the hydroxymethylbilane pre-uroporphyrinogen in several discrete steps. The sequence is that of Porphobilinogen deaminase from Nitrobacter winogradskyi (strain ATCC 25391 / DSM 10237 / CIP 104748 / NCIMB 11846 / Nb-255).